A 472-amino-acid polypeptide reads, in one-letter code: Transcriptional activator protein rec16 (472 aa).

Residues 420–444 form a C2H2-type zinc finger; it reads FICCYCTKPFLSISKLQEHESSCSH.

It localises to the nucleus. In terms of biological role, transcriptional activator that controls the onset of premeiotic DNA synthesis by regulating res2 and some other factor(s) in a mei2 independent cascade. This Schizosaccharomyces pombe (strain 972 / ATCC 24843) (Fission yeast) protein is Transcriptional activator protein rec16 (rec16).